A 764-amino-acid chain; its full sequence is Nucleolar transcription factor 1 (764 aa).

N-acetylmethionine is present on M1. A disordered region spans residues 1 to 21 (MNGEADCPTDLEMAAPKGQDR). 2 consecutive DNA-binding regions (HMG box) follow at residues 112-180 (PKKP…ARFR) and 196-264 (PEKP…RDYI). T201 carries the post-translational modification Phosphothreonine. S273, S336, and S364 each carry phosphoserine. The HMG box 3 DNA-binding region spans 298–362 (TKPPPNSYSL…DYEVELLRFL (65 aa)). Residues 370 to 379 (QQRVLGEEKM) show a composition bias toward basic and acidic residues. The interval 370-411 (QQRVLGEEKMLNINKKQTTSPASKKPSQEGGKGGSEKPKRPV) is disordered. Phosphoserine occurs at positions 389, 412, 433, 435, 484, 495, 546, 584, and 638. DNA-binding regions (HMG box) lie at residues 407–475 (PKRP…GGER), 482–549 (PESP…SEMR), and 568–634 (KKPP…DLWV). Positions 456–488 (YKAREAALKAQSERKPGGEREDRGKLPESPKRA) are disordered. A compositionally biased stretch (basic and acidic residues) spans 457–488 (KAREAALKAQSERKPGGEREDRGKLPESPKRA). Residues 546 to 576 (SEMRAPPAATNSSKKMKFQGEPKKPPMNGYQ) are disordered. The disordered stretch occupies residues 648 to 764 (YISNKRKNMT…SGDSSDSDSN (117 aa)). Positions 664–674 (PKSSRTTLQSK) are enriched in polar residues. The segment covering 677–745 (SEEDDDEEDD…DDDEDEDNES (69 aa)) has biased composition (acidic residues). Over residues 746–758 (EGSSSSSSSSGDS) the composition is skewed to low complexity.

Homodimer. Part of Pol I pre-initiation complex (PIC), in which Pol I core assembles with RRN3 and promoter-bound UTBF and SL1/TIF-IB complex. Interacts with TOP2A in the context of Pol I complex. Interacts with TBP. Interacts with TAF1A. Interacts with PHF6. Interacts with CEBPA (isoform 1 and isoform 4). Interacts with DDX11. Interacts with NOP53. Interacts with RASL11A. Interacts with DHX33. Binds to IRS1 and PIK3CA. Interacts with ALKBH2. Phosphorylated and activated by PIK3CA.

Its subcellular location is the nucleus. It localises to the nucleolus. Functionally, recognizes the ribosomal RNA gene promoter and activates transcription mediated by RNA polymerase I through cooperative interactions with the transcription factor SL1/TIF-IB complex. It binds specifically to the upstream control element. The polypeptide is Nucleolar transcription factor 1 (Ubtf) (Rattus norvegicus (Rat)).